Here is a 1472-residue protein sequence, read N- to C-terminus: MAVSGCTNDNSFGPIVQGCRGDFDFTLRFQNIILGILPAAIFILLALTRVATLAFRSRIVGGKVLQFTKLAVIAATAALQLVLLILSSTSNDESVDGDTFAVANSALGFSQWIVTLALSFAEHSRAPRPSSILTLYLLLQILLDVTRCRSYWLLATSFQITRYAGVFTATIGLKVITLLLELQNKARWMTWRKEDHSPEETSSLFNLGVYFWLIGIFRNGFKKTLSIKDDLYLLDHEMQSKILLDRLTISFAKSSANVGKRFRLAKALGRALIVPLILPVVPRIAMIGFQYAQPFFIHALLEYLIHKDVPKNDGYGLIGAALIIYAGIAISDALFWYFHQRCLYMARGCLASYVYRSTTQGKMTDIGDAAVLTLMSTDVERIIYGFHGLHDFWANIIEIGLGCFLLQRQLGLAFISPIVVILLCVAATTAIAWAIGERQSRWMAKIESRVGLTSSIISNIKSLRISGITAPVRDLVQKMREQELSIGNKFRWLLIMTATVAFVPSAMSPVVAFAFTNEQLDTLKIFVSFSFITLLTNPLGAMFQSVPAVIAAFVCLERIQKFLEIEPRVDYRKSSRPLSPADGSLLEQDDEKPLGLGQGASKSLISIVDGSFGWTSEKMTLTGISVDVPVGKLTLVVGPVASGKSTFCKALLGEVPFSSGEVIVPSTEAPIGYCEQTPFLKNGSIRDNIIWHSVYNQTRYEEVLDACLLRTDLDILPEGDATTIGSNGIMLSGGQKQRVSLARALYLETDFLLIDDILSGLDNSTGNDVFRRVFGPNGLMRRRNATAILCTHAIRYLPLADHIIILATDGTVGEQGSFDKLAETGIYIPTLGLSDADDASSTNSSIPVEETVAATMPVPLTAFSTVSIGHLEAESRSTGDAKVYRHYYQSVNGWATMTCLLSGIMYAVGRNFPSIWMGWWGSNSFDRTSSFYIGIMGLFRGLQIISLFLCATAVVIFMTTQSGKLLHNEILNTLVNAPLRFFTTTDFGAVTNLFSQDMTLIDGELPISLLNTVIQIFDVFAMAVVVAVGAPWLAIAYPVVFSIIYMLQMFYLRTSRQLRLLDLEAKSPLYAHFLDTIRGIATVRAQKLRDQEILFNQDLLNLSQRPAYLLAMAQRFLATFLNLIVMVLAVGVVAISTQLRTNSGFAGSSLVTLMSWGESISSLIQYYTQVEVSIGAVSRLKAFAQNVPSENLDQEDLEPAEEWPTQGDIAIRGVSASYKNDDESPASEDDEESPNLALEDLTILVKPGQKVALCGRTGSGKSSIILLLLRLLDPLSNQSENIVIDGVPYNRVNRSILRRRLIAVPQDPVFLPDGSSIKENLDPFNVASDEECLAVLEDVRLTKFATDHGSIHAGIRADELSAGQKQLFSLGRAVLRRRVKQRLFSIHGGVLLLDEVSSSVDSATDNLVQEIIKEEFADYTIVMVSHRLNIVMEYFDSVVVLDRGRVVETGDPRDLAKTEGSWFSQLWAMEKK.

The next 11 membrane-spanning stretches (helical) occupy residues 32-52, 67-87, 100-120, 163-183, 197-217, 271-291, 316-336, 386-406, 412-432, 493-513, and 534-554; these read IILG…RVAT, FTKL…LILS, FAVA…ALSF, YAGV…LELQ, SPEE…IGIF, ALIV…GFQY, GLIG…ALFW, FHGL…CFLL, LAFI…TAIA, LLIM…VVAF, and LLTN…AAFV. The region spanning 284–551 is the ABC transmembrane type-1 1 domain; it reads IAMIGFQYAQ…MFQSVPAVIA (268 aa). Positions 605 to 834 constitute an ABC transporter 1 domain; it reads ISIVDGSFGW…GIYIPTLGLS (230 aa). Residue 638-645 participates in ATP binding; the sequence is GPVASGKS. Residues N682, N696, N763, N784, and N843 are each glycosylated (N-linked (GlcNAc...) asparagine). Helical transmembrane passes span 900-920, 938-958, 1003-1023, and 1024-1044; these read LLSG…MGWW, LFRG…VIFM, GELP…FAMA, and VVVA…FSII. The ABC transmembrane type-1 2 domain occupies 900–1139; it reads LLSGIMYAVG…VGVVAISTQL (240 aa). N-linked (GlcNAc...) asparagine glycosylation occurs at N1101. A helical transmembrane segment spans residues 1116 to 1136; the sequence is FLATFLNLIVMVLAVGVVAIS. The ABC transporter 2 domain maps to 1218–1468; the sequence is YKNDDESPAS…EGSWFSQLWA (251 aa). 1255-1262 contributes to the ATP binding site; the sequence is GRTGSGKS. N1277 and N1293 each carry an N-linked (GlcNAc...) asparagine glycan.

The protein belongs to the ABC transporter superfamily. ABCC family. Conjugate transporter (TC 3.A.1.208) subfamily.

It is found in the cell membrane. It functions in the pathway secondary metabolite biosynthesis. ABC transporter; part of the Fg3_54/C64 gene cluster that mediates the biosynthesis of the octapeptide fusaoctaxin A, a virulence factor that is required for cell-to-cell invasiveness of plant host. The 2 nonribosomal peptide synthetases NRPS9 and NRPS5 form an assembly line which likely utilizes GABA as a starter unit (loaded on the unique module M1 of NRPS9) and sequentially incorporates seven extender units composed of the residues L-Ala, L-allo-Ile, L-Ser, L-Val, L-Ser, L-Leu and L-Leu, respectively. During the process, each of the residues that are tethered on modules M3-M7 of NRPS5 containing an E domain can undergo an epimerization reaction to produce a D-configuration before the transpeptidation reaction occurs. The elongation of the peptidyl chain might be terminated by module M8-mediated L-Leu incorporation, followed by R domain-catalyzed 4 electron reduction to release the resulting octapeptide from the assembly line as an alcohol. Fusaoctaxin A is cleaved by the cluster specific ABC transporter FGM5 to the pentapeptide fusapentaxin A and the tripeptide fusatrixin A. The other enzymes from the cluster, FGM1, FGM2, FGM3 and FGM9 seem not to be involved in the biosynthesis of fusaoctaxin A and their functions have still to be determined. This chain is ABC transporter FGM5, found in Gibberella zeae (strain ATCC MYA-4620 / CBS 123657 / FGSC 9075 / NRRL 31084 / PH-1) (Wheat head blight fungus).